The primary structure comprises 506 residues: Glutamate--tRNA ligase (506 aa).

Residues 12–22 (PSPTGDPHVGT) carry the 'HIGH' region motif. Positions 253–257 (KLSKR) match the 'KMSKS' region motif. Lys256 is an ATP binding site.

This sequence belongs to the class-I aminoacyl-tRNA synthetase family. Glutamate--tRNA ligase type 1 subfamily. As to quaternary structure, monomer.

The protein localises to the cytoplasm. It catalyses the reaction tRNA(Glu) + L-glutamate + ATP = L-glutamyl-tRNA(Glu) + AMP + diphosphate. Its function is as follows. Catalyzes the attachment of glutamate to tRNA(Glu) in a two-step reaction: glutamate is first activated by ATP to form Glu-AMP and then transferred to the acceptor end of tRNA(Glu). The sequence is that of Glutamate--tRNA ligase from Chlamydia trachomatis serovar A (strain ATCC VR-571B / DSM 19440 / HAR-13).